The chain runs to 177 residues: 2-C-methyl-D-erythritol 2,4-cyclodiphosphate synthase (177 aa).

Residues Asp-23 and His-25 each coordinate a divalent metal cation. 4-CDP-2-C-methyl-D-erythritol 2-phosphate-binding positions include 23-25 and 49-50; these read DVH and HS. His-57 lines the a divalent metal cation pocket. 4-CDP-2-C-methyl-D-erythritol 2-phosphate contacts are provided by residues 71–73, 76–80, 115–121, and Arg-157; these read DIG, FSDTD, and AQAPRMA.

It belongs to the IspF family. As to quaternary structure, homotrimer. Requires a divalent metal cation as cofactor.

It carries out the reaction 4-CDP-2-C-methyl-D-erythritol 2-phosphate = 2-C-methyl-D-erythritol 2,4-cyclic diphosphate + CMP. The protein operates within isoprenoid biosynthesis; isopentenyl diphosphate biosynthesis via DXP pathway; isopentenyl diphosphate from 1-deoxy-D-xylulose 5-phosphate: step 4/6. Functionally, involved in the biosynthesis of isopentenyl diphosphate (IPP) and dimethylallyl diphosphate (DMAPP), two major building blocks of isoprenoid compounds. Catalyzes the conversion of 4-diphosphocytidyl-2-C-methyl-D-erythritol 2-phosphate (CDP-ME2P) to 2-C-methyl-D-erythritol 2,4-cyclodiphosphate (ME-CPP) with a corresponding release of cytidine 5-monophosphate (CMP). This chain is 2-C-methyl-D-erythritol 2,4-cyclodiphosphate synthase, found in Nitrosospira multiformis (strain ATCC 25196 / NCIMB 11849 / C 71).